Here is a 210-residue protein sequence, read N- to C-terminus: Uridine kinase (210 aa).

12–19 (GGSGGGKT) provides a ligand contact to ATP.

This sequence belongs to the uridine kinase family.

The protein resides in the cytoplasm. It catalyses the reaction uridine + ATP = UMP + ADP + H(+). It carries out the reaction cytidine + ATP = CMP + ADP + H(+). Its pathway is pyrimidine metabolism; CTP biosynthesis via salvage pathway; CTP from cytidine: step 1/3. The protein operates within pyrimidine metabolism; UMP biosynthesis via salvage pathway; UMP from uridine: step 1/1. The polypeptide is Uridine kinase (Streptococcus gordonii (strain Challis / ATCC 35105 / BCRC 15272 / CH1 / DL1 / V288)).